A 286-amino-acid chain; its full sequence is 2,3,4,5-tetrahydropyridine-2,6-dicarboxylate N-succinyltransferase (286 aa).

It belongs to the transferase hexapeptide repeat family.

It is found in the cytoplasm. The catalysed reaction is (S)-2,3,4,5-tetrahydrodipicolinate + succinyl-CoA + H2O = (S)-2-succinylamino-6-oxoheptanedioate + CoA. The protein operates within amino-acid biosynthesis; L-lysine biosynthesis via DAP pathway; LL-2,6-diaminopimelate from (S)-tetrahydrodipicolinate (succinylase route): step 1/3. In Rhizobium leguminosarum bv. trifolii (strain WSM2304), this protein is 2,3,4,5-tetrahydropyridine-2,6-dicarboxylate N-succinyltransferase.